Reading from the N-terminus, the 481-residue chain is F-box protein At1g49360 (481 aa).

Residues 105–156 form the F-box domain; the sequence is LKEDLFLPSDLVRLILSRLSFKDNIRSSTVCKAWGDIAASVRVKSRRCWLLY.

This chain is F-box protein At1g49360, found in Arabidopsis thaliana (Mouse-ear cress).